The sequence spans 302 residues: tRNA-cytidine(32) 2-sulfurtransferase (302 aa).

The PP-loop motif signature appears at 44–49; sequence SGGKDS. [4Fe-4S] cluster-binding residues include Cys119, Cys122, and Cys210.

It belongs to the TtcA family. As to quaternary structure, homodimer. Mg(2+) is required as a cofactor. [4Fe-4S] cluster serves as cofactor.

The protein resides in the cytoplasm. The enzyme catalyses cytidine(32) in tRNA + S-sulfanyl-L-cysteinyl-[cysteine desulfurase] + AH2 + ATP = 2-thiocytidine(32) in tRNA + L-cysteinyl-[cysteine desulfurase] + A + AMP + diphosphate + H(+). It functions in the pathway tRNA modification. In terms of biological role, catalyzes the ATP-dependent 2-thiolation of cytidine in position 32 of tRNA, to form 2-thiocytidine (s(2)C32). The sulfur atoms are provided by the cysteine/cysteine desulfurase (IscS) system. The polypeptide is tRNA-cytidine(32) 2-sulfurtransferase (Tolumonas auensis (strain DSM 9187 / NBRC 110442 / TA 4)).